The following is a 207-amino-acid chain: Coiled-coil domain-containing protein 25 (207 aa).

The Extracellular portion of the chain corresponds to 1 to 104; the sequence is MVFYFTSAVV…SNLKKTADMD (104 aa). Positions 20–24 are DNA-binding; sequence KDKYE. The helical transmembrane segment at 105 to 121 threads the bilayer; that stretch reads IGQIGFHRQKEVKIVAV. Residues 112–189 are a coiled coil; sequence RQKEVKIVAV…EDLKNYTSLM (78 aa). The Cytoplasmic segment spans residues 122–207; that stretch reads EKKINEIVNR…EDGYDSDDFM (86 aa). Positions 140-183 are enriched in basic and acidic residues; that stretch reads YPDLAAEKESRDREERNEKKAQIQEQKKKEKEEVKKKKEMEDLK. A disordered region spans residues 140-207; that stretch reads YPDLAAEKES…EDGYDSDDFM (68 aa). A compositionally biased stretch (polar residues) spans 184–198; it reads NYTSLMKSDNMTTNE. S203 is subject to Phosphoserine.

It belongs to the CCDC25 family. Interacts (via cytoplasmic region) with ILK.

Its subcellular location is the cell membrane. The protein resides in the endomembrane system. Functionally, transmembrane receptor that senses neutrophil extracellular traps (NETs) and triggers the ILK-PARVB pathway to enhance cell motility. NETs are mainly composed of DNA fibers and are released by neutrophils to bind pathogens during inflammation. Specifically binds NETs on its extracellular region, in particular the 8-OHdG-enriched DNA present in NETs, and recruits ILK, initiating the ILK-PARVB cascade to induce cytoskeleton rearrangement and directional migration of cells. In Danio rerio (Zebrafish), this protein is Coiled-coil domain-containing protein 25.